Reading from the N-terminus, the 83-residue chain is Small ribosomal subunit protein bS21 (83 aa).

Residues 40 to 83 are disordered; the sequence is TPMDERRRKARSASKRNKVKWRYSNKSEETASETAETPASAPEA. Residues 47–62 are compositionally biased toward basic residues; that stretch reads RKARSASKRNKVKWRY. Low complexity predominate over residues 71 to 83; sequence SETAETPASAPEA.

Belongs to the bacterial ribosomal protein bS21 family.

The sequence is that of Small ribosomal subunit protein bS21 from Akkermansia muciniphila (strain ATCC BAA-835 / DSM 22959 / JCM 33894 / BCRC 81048 / CCUG 64013 / CIP 107961 / Muc).